The following is a 125-amino-acid chain: Photosystem II extrinsic protein U (125 aa).

A signal peptide spans 1 to 29 (MKRLLSWLTGLVVIAGLLIGLLVPPSVSA).

The protein belongs to the PsbU family. PSII is composed of 1 copy each of membrane proteins PsbA, PsbB, PsbC, PsbD, PsbE, PsbF, PsbH, PsbI, PsbJ, PsbK, PsbL, PsbM, PsbT, PsbX, PsbY, PsbZ, Psb30/Ycf12, peripheral proteins PsbO, CyanoQ (PsbQ), PsbU, PsbV and a large number of cofactors. It forms dimeric complexes.

It localises to the cellular thylakoid membrane. Functionally, one of the extrinsic, lumenal subunits of photosystem II (PSII). PSII is a light-driven water plastoquinone oxidoreductase, using light energy to abstract electrons from H(2)O, generating a proton gradient subsequently used for ATP formation. The extrinsic proteins stabilize the structure of photosystem II oxygen-evolving complex (OEC), the ion environment of oxygen evolution and protect the OEC against heat-induced inactivation. The protein is Photosystem II extrinsic protein U of Synechococcus sp. (strain CC9311).